The chain runs to 274 residues: NH(3)-dependent NAD(+) synthetase (274 aa).

46-53 (GISGGQDS) is an ATP binding site. A Mg(2+)-binding site is contributed by Asp-52. A deamido-NAD(+)-binding site is contributed by Arg-140. Thr-160 serves as a coordination point for ATP. Glu-165 is a Mg(2+) binding site. Deamido-NAD(+) is bound by residues Lys-173 and Asp-180. Residues Lys-189 and Thr-211 each coordinate ATP. 260 to 261 (HK) is a binding site for deamido-NAD(+).

This sequence belongs to the NAD synthetase family. In terms of assembly, homodimer.

The catalysed reaction is deamido-NAD(+) + NH4(+) + ATP = AMP + diphosphate + NAD(+) + H(+). It functions in the pathway cofactor biosynthesis; NAD(+) biosynthesis; NAD(+) from deamido-NAD(+) (ammonia route): step 1/1. In terms of biological role, catalyzes the ATP-dependent amidation of deamido-NAD to form NAD. Uses ammonia as a nitrogen source. This Streptococcus uberis (strain ATCC BAA-854 / 0140J) protein is NH(3)-dependent NAD(+) synthetase.